A 601-amino-acid polypeptide reads, in one-letter code: Glutamine--fructose-6-phosphate aminotransferase [isomerizing] (601 aa).

Residue cysteine 2 is the Nucleophile; for GATase activity of the active site. A Glutamine amidotransferase type-2 domain is found at 2–218 (CGIVGYIGYD…DHEIVIVKKD (217 aa)). 2 consecutive SIS domains span residues 284-423 (IIND…EHGR) and 453-591 (IATD…VDKP). Lysine 596 acts as the For Fru-6P isomerization activity in catalysis.

As to quaternary structure, homodimer.

Its subcellular location is the cytoplasm. The enzyme catalyses D-fructose 6-phosphate + L-glutamine = D-glucosamine 6-phosphate + L-glutamate. Catalyzes the first step in hexosamine metabolism, converting fructose-6P into glucosamine-6P using glutamine as a nitrogen source. The sequence is that of Glutamine--fructose-6-phosphate aminotransferase [isomerizing] from Staphylococcus aureus (strain COL).